A 1077-amino-acid chain; its full sequence is ATP-dependent helicase/deoxyribonuclease subunit B (1077 aa).

Belongs to the helicase family. AddB/RexB type 2 subfamily. In terms of assembly, heterodimer of AddA and RexB. Requires Mg(2+) as cofactor.

Functionally, the heterodimer acts as both an ATP-dependent DNA helicase and an ATP-dependent, dual-direction single-stranded exonuclease. Recognizes the chi site generating a DNA molecule suitable for the initiation of homologous recombination. This subunit has 5' -&gt; 3' nuclease activity but not helicase activity. The protein is ATP-dependent helicase/deoxyribonuclease subunit B of Streptococcus agalactiae serotype Ia (strain ATCC 27591 / A909 / CDC SS700).